Reading from the N-terminus, the 285-residue chain is NADPH-dependent 7-cyano-7-deazaguanine reductase (285 aa).

Ile-91 to Ser-93 contributes to the substrate binding site. Ser-93 to Lys-94 is an NADPH binding site. The Thioimide intermediate role is filled by Cys-192. Asp-199 serves as the catalytic Proton donor. His-231–Glu-232 lines the substrate pocket. Arg-260 to Gly-261 is an NADPH binding site.

This sequence belongs to the GTP cyclohydrolase I family. QueF type 2 subfamily. In terms of assembly, homodimer.

Its subcellular location is the cytoplasm. The catalysed reaction is 7-aminomethyl-7-carbaguanine + 2 NADP(+) = 7-cyano-7-deazaguanine + 2 NADPH + 3 H(+). Its pathway is tRNA modification; tRNA-queuosine biosynthesis. In terms of biological role, catalyzes the NADPH-dependent reduction of 7-cyano-7-deazaguanine (preQ0) to 7-aminomethyl-7-deazaguanine (preQ1). The chain is NADPH-dependent 7-cyano-7-deazaguanine reductase from Psychromonas ingrahamii (strain DSM 17664 / CCUG 51855 / 37).